Consider the following 265-residue polypeptide: MTLDLASALNDLQTKKPLVHHITNAVTINDCANITLCIGAAPVMAEAPEEVAEMVAMAGALVLNIGTLSKSQISAMLIAGRAANDLEVPVILDPVGAGATMLRTESARRLLTELQVAVVKGNAGEIGLLAGAAGRVRGVDSAGLDGDPVAVCKSLVNAYSCTVAMSGATDIVTDGDRVVLIDNGDPRMGVVSGTGCMASSLTGAFAAGSRDQVCSTAAALAAFGLAGEKAAKRAFGPSSFKVALMDEVAALTPPVLSAGAKIRIL.

A substrate-binding site is contributed by Met44. Positions 120 and 166 each coordinate ATP. Substrate is bound at residue Gly193.

The protein belongs to the Thz kinase family. The cofactor is Mg(2+).

The enzyme catalyses 5-(2-hydroxyethyl)-4-methylthiazole + ATP = 4-methyl-5-(2-phosphooxyethyl)-thiazole + ADP + H(+). It functions in the pathway cofactor biosynthesis; thiamine diphosphate biosynthesis; 4-methyl-5-(2-phosphoethyl)-thiazole from 5-(2-hydroxyethyl)-4-methylthiazole: step 1/1. Catalyzes the phosphorylation of the hydroxyl group of 4-methyl-5-beta-hydroxyethylthiazole (THZ). The protein is Hydroxyethylthiazole kinase of Methanosphaerula palustris (strain ATCC BAA-1556 / DSM 19958 / E1-9c).